The following is a 557-amino-acid chain: Formate--tetrahydrofolate ligase (557 aa).

67 to 74 (TPAGEGKS) is an ATP binding site.

Belongs to the formate--tetrahydrofolate ligase family.

The enzyme catalyses (6S)-5,6,7,8-tetrahydrofolate + formate + ATP = (6R)-10-formyltetrahydrofolate + ADP + phosphate. It participates in one-carbon metabolism; tetrahydrofolate interconversion. This Lacticaseibacillus paracasei (strain ATCC 334 / BCRC 17002 / CCUG 31169 / CIP 107868 / KCTC 3260 / NRRL B-441) (Lactobacillus paracasei) protein is Formate--tetrahydrofolate ligase.